The sequence spans 467 residues: DNA polymerase IV (467 aa).

The 183-residue stretch at 5–187 (VLHIDMDAFF…LPVGALWGVG (183 aa)) folds into the UmuC domain. Mg(2+) contacts are provided by D9 and D104. E105 is a catalytic residue. Disordered stretches follow at residues 364–386 (PDTD…VEAP) and 428–449 (TKGR…DPLD).

It belongs to the DNA polymerase type-Y family. In terms of assembly, monomer. Mg(2+) serves as cofactor.

The protein localises to the cytoplasm. The catalysed reaction is DNA(n) + a 2'-deoxyribonucleoside 5'-triphosphate = DNA(n+1) + diphosphate. Poorly processive, error-prone DNA polymerase involved in untargeted mutagenesis. Copies undamaged DNA at stalled replication forks, which arise in vivo from mismatched or misaligned primer ends. These misaligned primers can be extended by PolIV. Exhibits no 3'-5' exonuclease (proofreading) activity. May be involved in translesional synthesis, in conjunction with the beta clamp from PolIII. In Corynebacterium glutamicum (strain R), this protein is DNA polymerase IV.